Reading from the N-terminus, the 1481-residue chain is DNA excision repair protein ERCC-6 (1481 aa).

Residues 1-506 (MFHEEVPNST…GFLFKKLFKY (506 aa)) form an N-terminal domain; essential for its chromatin remodeling activity region. S158 carries the phosphoserine; by CDK2 modification. K170 is modified (N6-methylated lysine; by EHMT2). Residue K256 forms a Glycyl lysine isopeptide (Lys-Gly) (interchain with G-Cter in SUMO2) linkage. K298 carries the post-translational modification N6-methylated lysine; by EHMT2. The segment at 309–452 (AIETKADQRS…RKVARRQDDG (144 aa)) is disordered. Positions 327–337 (RLKKHSRKLQR) are enriched in basic residues. Residues 353 to 363 (KPLEPEVRPEA) show a composition bias toward basic and acidic residues. Composition is skewed to acidic residues over residues 378–390 (DGEEEEEQEEEEG) and 420–435 (EIDDDFFPSSEEEDEA). Phosphoserine is present on residues S428 and S429. At K444 the chain carries N6-methylated lysine; by EHMT2. A phosphoserine mark is found at S482 and S485. One can recognise a Helicase ATP-binding domain in the interval 515–691 (WELHCQQAGG…WSLFDFIFPG (177 aa)). 528–535 (DEMGLGKT) lines the ATP pocket. Positions 642-645 (DEGH) match the DEAH box motif. Residues 839-998 (VVESLLKIWH…RRFFKSNDLY (160 aa)) enclose the Helicase C-terminal domain. 3 disordered regions span residues 1040–1096 (LGTD…NRAS), 1114–1238 (SVMS…DRSS), and 1307–1372 (GHRG…GAPS). Position 1047 is an N6-methylated lysine; by EHMT2 (K1047). A compositionally biased stretch (polar residues) spans 1138–1147 (ASTSEKQGSS). A compositionally biased stretch (basic residues) spans 1192 to 1201 (QPKQKAKNSK). Basic and acidic residues predominate over residues 1202–1212 (HCRDAKFEGTR). The span at 1330-1345 (LPVQHPSSLTEKTQNN) shows a compositional bias: polar residues. Residues 1346–1364 (MKKEGKAHTPEHFSGKEDG) are compositionally biased toward basic and acidic residues. Residues 1373-1385 (SSSLLARMRARNH) carry the CSA-interacting motif (CIM) motif. Positions 1387-1416 (ILPERLESDSEHLAEAAAVPPCGTEHDDLL) are ubiquitin-binding domain (UBD). The segment at 1417-1481 (VDMRNFIAFQ…GIWKLKPEYC (65 aa)) is winged-helix domain (WHD). The essential for its interaction with RNA polymerase II, transcription-coupled nucleotide excision repair activity, association with chromatin after UV irradiation and for mediating the UV-induced translocation of ERRC8 to the nuclear matrix stretch occupies residues 1434–1481 (STQEILQEFESKLSVAQSCVFRELLRNLCNFHRTPGGEGIWKLKPEYC).

It belongs to the SNF2/RAD54 helicase family. Homodimer. Binds DNA. Interacts with ERCC8. Interacts with RNA polymerase II; interaction is enhanced by UV irradiation. Component of the B-WICH complex, at least composed of SMARCA5/SNF2H, BAZ1B/WSTF, SF3B1, DEK, MYO1C, ERCC6, MYBBP1A and DDX21. Interacts with KIAA1530/UVSSA. Interacts with ELOA and CUL5; the interaction is induced by DNA damaging agents or by inhibitors of RNA polymerase II elongation. Interacts (via WHD region) with RIF1. Interacts with SMARCC2/BAF170, SMARCB1/BAF47 and the neuron-specific chromatin remodeling complex (nBAF complex). Interacts with ERCC5/XPG (via C-terminus); the interaction stimulates ERCC6/CSB binding to DNA repair bubble and ERCC6/CSB ATPase activity. May form a complex composed of RNA polymerase II, ERCC6/CSB and ERCC5/XPG which associates with the DNA repair bubble during transcription-coupled nucleotide excision repair. Interacts with CAND1, CSTF1, DDX3X, DDX5, DDX17, DDX23, DHX36, HDAC1, HNRNPU, MTA2, PRPF3, PSMD3, RBBP4, SFPQ, SMARCA1, SMARCA2, TOP1, USP7 and XRCC5. Post-translationally, phosphorylated in a cell cycle-dependent manner at Ser-158 by cyclin A-CDK2 in response to DNA damage. Phosphorylation at this site promotes the intramolecular interaction of the N-terminal domain with the helicase ATP-binding domain, thereby probably releasing the inhibitory effect of the N-terminal domain on its ATPase activity. Phosphorylation is essential for its chromatin remodeling activity. Ubiquitinated at the C-terminus. Ubiquitination by the CSA complex leads to ERCC6 proteasomal degradation in a UV-dependent manner. Stabilized following interaction with KIAA1530/UVSSA, which promotes recruitment of deubiquitinating enzyme USP7, leading to deubiquitination of ERCC6 thereby preventing UV-induced degradation of ERCC6 by the proteasome.

It is found in the nucleus. The protein localises to the chromosome. It catalyses the reaction ATP + H2O = ADP + phosphate + H(+). In terms of biological role, essential factor involved in transcription-coupled nucleotide excision repair (TC-NER), a process during which RNA polymerase II-blocking lesions are rapidly removed from the transcribed strand of active genes. Plays a central role in the initiation of the TC-NER process: specifically recognizes and binds RNA polymerase II stalled at a lesion, and mediates recruitment of ERCC8/CSA, initiating DNA damage excision by TFIIH recruitment. Upon DNA-binding, it locally modifies DNA conformation by wrapping the DNA around itself, thereby modifying the interface between stalled RNA polymerase II and DNA. Acts as a chromatin remodeler at DSBs; DNA-dependent ATPase-dependent activity is essential for this function. Plays an important role in regulating the choice of the DNA double-strand breaks (DSBs) repair pathway and G2/M checkpoint activation; DNA-dependent ATPase activity is essential for this function. Regulates the DNA repair pathway choice by inhibiting non-homologous end joining (NHEJ), thereby promoting the homologous recombination (HR)-mediated repair of DSBs during the S/G2 phases of the cell cycle. Mediates the activation of the ATM- and CHEK2-dependent DNA damage responses thus preventing premature entry of cells into mitosis following the induction of DNA DSBs. Remodels chromatin by evicting histones from chromatin flanking DSBs, limiting RIF1 accumulation at DSBs thereby promoting BRCA1-mediated HR. Required for stable recruitment of ELOA and CUL5 to DNA damage sites. Also involved in UV-induced translocation of ERCC8 to the nuclear matrix. Essential for neuronal differentiation and neuritogenesis; regulates transcription and chromatin remodeling activities required during neurogenesis. The sequence is that of DNA excision repair protein ERCC-6 (Ercc6) from Mus musculus (Mouse).